The primary structure comprises 238 residues: Urease accessory protein UreF (238 aa).

This sequence belongs to the UreF family. In terms of assembly, ureD, UreF and UreG form a complex that acts as a GTP-hydrolysis-dependent molecular chaperone, activating the urease apoprotein by helping to assemble the nickel containing metallocenter of UreC. The UreE protein probably delivers the nickel.

The protein localises to the cytoplasm. Functionally, required for maturation of urease via the functional incorporation of the urease nickel metallocenter. The sequence is that of Urease accessory protein UreF from Rhodopseudomonas palustris (strain BisA53).